A 156-amino-acid chain; its full sequence is ATP synthase subunit b (156 aa).

A helical transmembrane segment spans residues 7 to 29 (LIGQSLTFIAFILFCMKYVWPQL).

The protein belongs to the ATPase B chain family. As to quaternary structure, F-type ATPases have 2 components, F(1) - the catalytic core - and F(0) - the membrane proton channel. F(1) has five subunits: alpha(3), beta(3), gamma(1), delta(1), epsilon(1). F(0) has three main subunits: a(1), b(2) and c(10-14). The alpha and beta chains form an alternating ring which encloses part of the gamma chain. F(1) is attached to F(0) by a central stalk formed by the gamma and epsilon chains, while a peripheral stalk is formed by the delta and b chains.

Its subcellular location is the cell inner membrane. In terms of biological role, f(1)F(0) ATP synthase produces ATP from ADP in the presence of a proton or sodium gradient. F-type ATPases consist of two structural domains, F(1) containing the extramembraneous catalytic core and F(0) containing the membrane proton channel, linked together by a central stalk and a peripheral stalk. During catalysis, ATP synthesis in the catalytic domain of F(1) is coupled via a rotary mechanism of the central stalk subunits to proton translocation. Functionally, component of the F(0) channel, it forms part of the peripheral stalk, linking F(1) to F(0). The chain is ATP synthase subunit b from Saccharophagus degradans (strain 2-40 / ATCC 43961 / DSM 17024).